Consider the following 587-residue polypeptide: MGLDYILVHVTYNIPLAGILTLVYWPFMTRLDWQKISTLVIISLVATIPWDSYLVRHRIWTYAPNGVIGWTLYDIPSEEVFFFIIQTYNTSLVYLILTRWLVLPMYLGTVARKETLIGASILLLAISVGLIALCFGDHFTYFGMIITWAGPFLLIQWVFSSGFIIALPKLELMVSITLPTLFLWTVDTISINQGTWTVEAPTKLGVQLWSGMDIEEVLFFLITNIVIVFGLVCIDYAIAMATCELVQSPQAVQSFPSYFRVLARFVTNKYHPDKQFVASLRKAVDRLAASSQSMYMGSAMFQGPFRIDLILLYSFFRVADDLVDESQDTESARMIIEQCDQLLEAKFSHPELFPFSPGYQEAKHPAPPELIAAIDSLPVSRLRLEHLKGLIEGFRTDLTFSAKPGSFPFVTESDLDTYAYHVASSVAASMLGLVVHHFPDHQFAINVFLRRRVVDAGERMGQTLQYINVARDIARDAAINRVYLPTTWLKQQGLGPEDVLASPTDSRLELVRDRLLDRAEFLSASAREEMKFLPDEVQGPFLATVDSYLEIGAALRRGMRPRTLDDKLRLPLGTRLWVAYRAMAWRK.

The lycopene beta-cyclase stretch occupies residues 1–236; sequence MGLDYILVHV…IVFGLVCIDY (236 aa). Helical transmembrane passes span 5–25, 35–55, 65–85, 91–111, 116–136, 145–165, and 218–238; these read YILV…LVYW, KIST…SYLV, NGVI…FFII, SLVY…GTVA, LIGA…LCFG, IITW…GFII, and LFFL…DYAI. The interval 243–587 is phytoene synthase; it reads CELVQSPQAV…VAYRAMAWRK (345 aa).

This sequence in the N-terminal section; belongs to the lycopene beta-cyclase family. It in the C-terminal section; belongs to the phytoene/squalene synthase family.

It is found in the membrane. It carries out the reaction all-trans-lycopene = gamma-carotene. It catalyses the reaction gamma-carotene = all-trans-beta-carotene. The enzyme catalyses 2 (2E,6E,10E)-geranylgeranyl diphosphate = 15-cis-phytoene + 2 diphosphate. It functions in the pathway carotenoid biosynthesis; beta-carotene biosynthesis. It participates in carotenoid biosynthesis; phytoene biosynthesis; all-trans-phytoene from geranylgeranyl diphosphate: step 1/1. In terms of biological role, bifunctional enzyme that catalyzes the reactions from geranylgeranyl diphosphate to phytoene (phytoene synthase) and lycopene to beta-carotene via the intermediate gamma-carotene (lycopene cyclase). The protein is Bifunctional lycopene cyclase/phytoene synthase of Aspergillus oryzae (strain ATCC 42149 / RIB 40) (Yellow koji mold).